A 444-amino-acid polypeptide reads, in one-letter code: Tubulin beta-8 chain (444 aa).

The short motif at 1-4 (MREI) is the MREI motif element. The GTP site is built by Gln-11, Glu-69, Ser-138, Gly-142, Thr-143, and Gly-144. Glu-69 provides a ligand contact to Mg(2+). Ser-172 is subject to Phosphoserine; by CDK1. GTP-binding residues include Asn-204 and Asn-226. The disordered stretch occupies residues 423–444 (QQYQDATAEEEEDEEYAEEEVA). Residues 429–444 (TAEEEEDEEYAEEEVA) show a composition bias toward acidic residues. Glu-436 is modified (5-glutamyl polyglutamate).

Belongs to the tubulin family. As to quaternary structure, dimer of alpha and beta chains. A typical microtubule is a hollow water-filled tube with an outer diameter of 25 nm and an inner diameter of 15 nM. Alpha-beta heterodimers associate head-to-tail to form protofilaments running lengthwise along the microtubule wall with the beta-tubulin subunit facing the microtubule plus end conferring a structural polarity. Microtubules usually have 13 protofilaments but different protofilament numbers can be found in some organisms and specialized cells. Mg(2+) serves as cofactor. Some glutamate residues at the C-terminus are polyglycylated, resulting in polyglycine chains on the gamma-carboxyl group. Glycylation is mainly limited to tubulin incorporated into axonemes (cilia and flagella) whereas glutamylation is prevalent in neuronal cells, centrioles, axonemes, and the mitotic spindle. Both modifications can coexist on the same protein on adjacent residues, and lowering polyglycylation levels increases polyglutamylation, and reciprocally. Cilia and flagella glycylation is required for their stability and maintenance. Flagella glycylation controls sperm motility. In terms of processing, some glutamate residues at the C-terminus are polyglutamylated, resulting in polyglutamate chains on the gamma-carboxyl group. Polyglutamylation plays a key role in microtubule severing by spastin (SPAST). SPAST preferentially recognizes and acts on microtubules decorated with short polyglutamate tails: severing activity by SPAST increases as the number of glutamates per tubulin rises from one to eight, but decreases beyond this glutamylation threshold. Glutamylation is also involved in cilia motility. Post-translationally, phosphorylated on Ser-172 by CDK1 during the cell cycle, from metaphase to telophase, but not in interphase. This phosphorylation inhibits tubulin incorporation into microtubules.

Its subcellular location is the cytoplasm. The protein localises to the cytoskeleton. It localises to the spindle. Its function is as follows. Tubulin is the major constituent of microtubules, a cylinder consisting of laterally associated linear protofilaments composed of alpha- and beta-tubulin heterodimers. Microtubules grow by the addition of GTP-tubulin dimers to the microtubule end, where a stabilizing cap forms. Below the cap, tubulin dimers are in GDP-bound state, owing to GTPase activity of alpha-tubulin. Has a key role in meiotic spindle assembly and oocyte maturation. In Pan troglodytes (Chimpanzee), this protein is Tubulin beta-8 chain (TUBB8).